The chain runs to 546 residues: Chaperonin GroEL (546 aa).

Residues 29 to 32 (TLGP), 86 to 90 (DGTTT), G413, 476 to 478 (NAA), and D492 each bind ATP. The interval 521 to 546 (RPDESGNDAGAGAQGMDPSMMGGGMM) is disordered.

This sequence belongs to the chaperonin (HSP60) family. Forms a cylinder of 14 subunits composed of two heptameric rings stacked back-to-back. Interacts with the co-chaperonin GroES.

It localises to the cytoplasm. The catalysed reaction is ATP + H2O + a folded polypeptide = ADP + phosphate + an unfolded polypeptide.. In terms of biological role, together with its co-chaperonin GroES, plays an essential role in assisting protein folding. The GroEL-GroES system forms a nano-cage that allows encapsulation of the non-native substrate proteins and provides a physical environment optimized to promote and accelerate protein folding. The sequence is that of Chaperonin GroEL from Tetragenococcus halophilus (Pediococcus halophilus).